Here is a 78-residue protein sequence, read N- to C-terminus: Calcium/calmodulin-dependent protein kinase II inhibitor 1 (78 aa).

The CAMK2 inhibitory domain stretch occupies residues 41–68; it reads NKRPPKLGQIGRSKRVVIEDDRIDDVLK.

This sequence belongs to the CAMK2N family. Interacts with CAMK2B; the presence of Ca(2+)/calmodulin increases the interaction but is not essential. Interacts with CAMK2A; this interaction requires CAMK2A activation by Ca(2+).

The protein resides in the synapse. It is found in the cell projection. Its subcellular location is the dendrite. It localises to the postsynaptic density. Potent and specific inhibitor of CaM-kinase II (CAMK2). Plays a role in the maintenance of long-term retrieval-induced memory in response to contextual fear. Modulates blood pressure and vascular reactivity via regulation of CAMK2 activity in addition to regulation of left ventricular mass. Mediates the NLRP3 inflammasome in cardiomyocytes via acting as an inhibitor of the MAPK14/p38 and MAPK8/JNK pathways, thereby regulating ventricular remodeling and cardiac rhythm post-myocardial infarction. Negatively effects insulin sensitivity and promotes lipid formation in adipose tissues independent of CAMK2 signaling. This is Calcium/calmodulin-dependent protein kinase II inhibitor 1 (CAMK2N1) from Bos taurus (Bovine).